A 79-amino-acid chain; its full sequence is RNA-binding protein Hfq (79 aa).

The Sm domain maps to 10-69 (DPFLNALRKEHVPVSIYLVNGIKLQGNIESFDQYVVLLRNTVTQMVYKHAISTVVPARAV).

The protein belongs to the Hfq family. Homohexamer.

Its function is as follows. RNA chaperone that binds small regulatory RNA (sRNAs) and mRNAs to facilitate mRNA translational regulation in response to envelope stress, environmental stress and changes in metabolite concentrations. Also binds with high specificity to tRNAs. The sequence is that of RNA-binding protein Hfq from Ralstonia nicotianae (strain ATCC BAA-1114 / GMI1000) (Ralstonia solanacearum).